Consider the following 569-residue polypeptide: GATOR1 complex protein NPRL3 (569 aa).

Disordered stretches follow at residues 27–60 (PFQR…EQDG) and 416–477 (PSEE…GDSP). Polar residues-rich tracts occupy residues 34–52 (HPAS…SNTG) and 438–468 (SLST…NSSA). Residue S476 is modified to Phosphoserine.

The protein belongs to the NPR3 family. In terms of assembly, within the GATOR complex, component of the GATOR1 subcomplex, made of DEPDC5, NPRL2 and NPRL3. GATOR1 mediates the strong interaction of the GATOR complex with small GTPases Rag (RagA/RRAGA, RagB/RRAGB, RagC/RRAGC and/or RagD/RRAGD) heterodimers. GATOR1 interacts with GPR155/LYCHOS; interaction takes place in presence of cholesterol and prevents interaction between GATOR1 and KICSTOR. As to expression, widely expressed. Expressed in the frontal lobe cortex as well as in the temporal, parietal, and occipital lobes.

The protein resides in the lysosome membrane. In terms of biological role, as a component of the GATOR1 complex functions as an inhibitor of the amino acid-sensing branch of the mTORC1 pathway. In response to amino acid depletion, the GATOR1 complex has GTPase activating protein (GAP) activity and strongly increases GTP hydrolysis by RagA/RRAGA (or RagB/RRAGB) within heterodimeric Rag complexes, thereby turning them into their inactive GDP-bound form, releasing mTORC1 from lysosomal surface and inhibiting mTORC1 signaling. In the presence of abundant amino acids, the GATOR1 complex is negatively regulated by GATOR2, the other GATOR subcomplex, in this amino acid-sensing branch of the TORC1 pathway. The sequence is that of GATOR1 complex protein NPRL3 from Homo sapiens (Human).